The primary structure comprises 168 residues: D-aminoacyl-tRNA deacylase 2 (168 aa).

Residues 160–161 (GP) carry the Gly-transPro motif, allows the protein to recognize chirality of D-amino acids motif.

Belongs to the DTD family. Homodimer.

The protein localises to the cytoplasm. It carries out the reaction a D-aminoacyl-tRNA + H2O = a tRNA + a D-alpha-amino acid + H(+). It catalyses the reaction glycyl-tRNA(Ala) + H2O = tRNA(Ala) + glycine + H(+). The catalysed reaction is D-tyrosyl-tRNA(Tyr) + H2O = D-tyrosine + tRNA(Tyr). The enzyme catalyses L-alanyl-tRNA(Thr) + H2O = tRNA(Thr) + L-alanine + H(+). Deacylates mischarged D-aminoacyl-tRNAs. Also deacylates mischarged glycyl-tRNA(Ala), protecting cells against glycine mischarging by AlaRS. Probably acts by rejecting L-amino acids from its binding site rather than specific recognition of D-amino acids. Catalyzes the hydrolysis of D-tyrosyl-tRNA(Tyr), has no activity on correctly charged L-tyrosyl-tRNA(Tyr). By recycling D-aminoacyl-tRNA to D-amino acids and free tRNA molecules, this enzyme counteracts the toxicity associated with the formation of D-aminoacyl-tRNA entities in vivo and helps enforce protein L-homochirality. In contrast to DTD1, deacylates L-Ala mischarged on tRNA(Thr)(G4.U69) by alanine-tRNA ligase AARS. Can deacylate L-Ala due to a relaxed specificity for substrate chirality caused by the trans conformation of the Gly-Pro motif in the active site. Also hydrolyzes correctly charged, achiral, glycyl-tRNA(Gly) in vitro, although in vivo EEF1A1/EF-Tu may protect cognate achiral glycyl-tRNA(Gly) from DTD2-mediated deacetylation. This chain is D-aminoacyl-tRNA deacylase 2 (DTD2), found in Homo sapiens (Human).